A 691-amino-acid chain; its full sequence is Elongation factor G (691 aa).

Residues 8 to 282 form the tr-type G domain; it reads ERVRNIGIAA…AVVDYLPAPV (275 aa). GTP-binding positions include 17–24, 81–85, and 135–138; these read AHIDAGKT, DTPGH, and NKMD.

The protein belongs to the TRAFAC class translation factor GTPase superfamily. Classic translation factor GTPase family. EF-G/EF-2 subfamily.

It is found in the cytoplasm. Its function is as follows. Catalyzes the GTP-dependent ribosomal translocation step during translation elongation. During this step, the ribosome changes from the pre-translocational (PRE) to the post-translocational (POST) state as the newly formed A-site-bound peptidyl-tRNA and P-site-bound deacylated tRNA move to the P and E sites, respectively. Catalyzes the coordinated movement of the two tRNA molecules, the mRNA and conformational changes in the ribosome. The polypeptide is Elongation factor G (Prochlorococcus marinus (strain MIT 9211)).